The primary structure comprises 88 residues: Large ribosomal subunit protein eL34 (88 aa).

The segment at 41 to 72 (RPLNGIPRGRPNELRKLPKTKKRPERPMPNLC) is disordered.

The protein belongs to the eukaryotic ribosomal protein eL34 family.

The polypeptide is Large ribosomal subunit protein eL34 (Thermococcus sibiricus (strain DSM 12597 / MM 739)).